Consider the following 110-residue polypeptide: uncharacterized protein (110 aa).

The protein belongs to the RuBisCO large chain family.

It is found in the mitochondrion. This is an uncharacterized protein from Arabidopsis thaliana (Mouse-ear cress).